Here is a 216-residue protein sequence, read N- to C-terminus: MOB kinase activator 1A (216 aa).

S2 carries the post-translational modification N-acetylserine. 2 positions are modified to phosphothreonine: T12 and T35. At T74 the chain carries Phosphothreonine; by STK3/MST2. Residues C79, C84, H161, and H166 each contribute to the Zn(2+) site. T181 carries the phosphothreonine modification.

Belongs to the MOB1/phocein family. Binds STK38 and STK38L. Interacts with LATS1 and LATS2. Forms a tripartite complex with STK38 and STK3/MST2. Phosphorylated by STK3/MST2 and STK4/MST1 and this phosphorylation enhances its binding to LATS1. As to expression, adrenal gland, bone marrow, brain, placenta, prostate, salivary gland, skeletal muscle, testis, thymus, thyroid gland, heart, spinal cord, fetal brain and fetal liver.

Activator of LATS1/2 in the Hippo signaling pathway which plays a pivotal role in organ size control and tumor suppression by restricting proliferation and promoting apoptosis. The core of this pathway is composed of a kinase cascade wherein STK3/MST2 and STK4/MST1, in complex with its regulatory protein SAV1, phosphorylates and activates LATS1/2 in complex with its regulatory protein MOB1, which in turn phosphorylates and inactivates YAP1 oncoprotein and WWTR1/TAZ. Phosphorylation of YAP1 by LATS1/2 inhibits its translocation into the nucleus to regulate cellular genes important for cell proliferation, cell death, and cell migration. Stimulates the kinase activity of STK38 and STK38L. Acts cooperatively with STK3/MST2 to activate STK38. The protein is MOB kinase activator 1A of Homo sapiens (Human).